Consider the following 162-residue polypeptide: RxLR effector protein PITG_06094 (162 aa).

The first 20 residues, 1 to 20 (MRLSFILAATLTGLLACATA), serve as a signal peptide directing secretion. The short motif at 51–91 (RFLRAYNDAEDDSEDPKNVKNTVDAKPADESEDSELSEEER) is the RxLR-dEER element. The tract at residues 56-88 (YNDAEDDSEDPKNVKNTVDAKPADESEDSELSE) is disordered.

It belongs to the RxLR effector family.

The protein localises to the secreted. The protein resides in the host cytoplasm. Its subcellular location is the host nucleus. It localises to the host nucleolus. Its function is as follows. Effector that enhances P.infestans colonization of Nicotiana benthamiana leaves. The polypeptide is RxLR effector protein PITG_06094 (Phytophthora infestans (strain T30-4) (Potato late blight agent)).